A 595-amino-acid chain; its full sequence is Mitoguardin 1 (595 aa).

2 helical membrane-spanning segments follow: residues 11–31 and 38–58; these read LPIK…YYSL and TGTK…IIIA.

Belongs to the mitoguardin family. Homodimer and heterodimer; forms heterodimers with miga2.

The protein localises to the mitochondrion outer membrane. Its function is as follows. Regulator of mitochondrial fusion: acts by forming homo- and heterodimers at the mitochondrial outer membrane and facilitating the formation of pld6/MitoPLD dimers. May act by regulating phospholipid metabolism via pld6/MitoPLD. This chain is Mitoguardin 1, found in Danio rerio (Zebrafish).